Consider the following 417-residue polypeptide: MRQSHQLPLVGLLLFSLIPSQLCQSCVVSEKDYSHLRLLISAMDNLEQIRGIYGASILLSQRLAGIQNPSLEEELSQRIQDDMNRRDMSNLTSGQLALIILAFGACKTPDVRFIHDHHLVEKLGEKFKEEIKNMEIHNSNPLTNYYQLSFDVLTLCLFRGNYSISNVTHYFNPENKNFNLSGHFSVDTGAVAVLALTCVKRSISNGKIKAAIKDSDTIQKYIESLVHKIQSEKMVVSLETRIAQEKLCRLSLSHQTITKMNQIAKKLWTRCLTHSQGVFRLPIAAAQILPALLGKTYLDVTKLLLVPKVQVNITDEPVPVVPTLSPENISVIYCVKINEISNCINITVFLDVMKAAQEKNSTIYGFTMTETPWGPYITSVQGIWANNNERTYWEHSEQQQITKPRSMGIMLSKMESI.

The first 25 residues, 1 to 25 (MRQSHQLPLVGLLLFSLIPSQLCQS), serve as a signal peptide directing secretion. Residues 24-308 (QSCVVSEKDY…DVTKLLLVPK (285 aa)) form a globular N-terminal alpha domain region. Asparagine 90 carries an N-linked (GlcNAc...) asparagine glycan. 143–147 (TNYYQ) provides a ligand contact to cyanocob(III)alamin. Cysteine 156 and cysteine 198 are joined by a disulfide. N-linked (GlcNAc...) asparagine glycans are attached at residues asparagine 161, asparagine 166, and asparagine 179. Cyanocob(III)alamin contacts are provided by aspartate 187 and glutamine 287. The segment at 309 to 327 (VQVNITDEPVPVVPTLSPE) is flexible linker. N-linked (GlcNAc...) asparagine glycans are attached at residues asparagine 312, asparagine 328, asparagine 345, and asparagine 360. The segment at 328–417 (NISVIYCVKI…GIMLSKMESI (90 aa)) is globular C-terminal beta domain. Residues 376 to 377 (YI) and 393 to 395 (WEH) contribute to the cyanocob(III)alamin site.

The protein belongs to the eukaryotic cobalamin transport proteins family. Contains about 30% carbohydrates. As to expression, haptocorrins are a family of cobalamin-binding glycoproteins found in blood, salivary and mucosal secretions.

Its subcellular location is the secreted. In terms of biological role, binds vitamin B12 with femtomolar affinity and protects it from the acidic environment of the stomach. Binds to cobalamin and to cobalamin analogs such as cobinamide. This chain is Transcobalamin-1 (TCN1), found in Sus scrofa (Pig).